The following is a 575-amino-acid chain: Dihydroxy-acid dehydratase (575 aa).

The segment at 1-25 is disordered; it reads MPTTDSARAADIKQPDIKPRSRDVT. Residues 8–25 show a composition bias toward basic and acidic residues; the sequence is RAADIKQPDIKPRSRDVT. C64 provides a ligand contact to [2Fe-2S] cluster. D96 contributes to the Mg(2+) binding site. Residue C137 coordinates [2Fe-2S] cluster. The Mg(2+) site is built by D138 and K139. K139 carries the post-translational modification N6-carboxylysine. C214 contributes to the [2Fe-2S] cluster binding site. Residue E465 coordinates Mg(2+). Residue S491 is the Proton acceptor of the active site.

This sequence belongs to the IlvD/Edd family. As to quaternary structure, homodimer. It depends on [2Fe-2S] cluster as a cofactor. Mg(2+) is required as a cofactor.

The enzyme catalyses (2R)-2,3-dihydroxy-3-methylbutanoate = 3-methyl-2-oxobutanoate + H2O. The catalysed reaction is (2R,3R)-2,3-dihydroxy-3-methylpentanoate = (S)-3-methyl-2-oxopentanoate + H2O. The protein operates within amino-acid biosynthesis; L-isoleucine biosynthesis; L-isoleucine from 2-oxobutanoate: step 3/4. It participates in amino-acid biosynthesis; L-valine biosynthesis; L-valine from pyruvate: step 3/4. Its function is as follows. Functions in the biosynthesis of branched-chain amino acids. Catalyzes the dehydration of (2R,3R)-2,3-dihydroxy-3-methylpentanoate (2,3-dihydroxy-3-methylvalerate) into 2-oxo-3-methylpentanoate (2-oxo-3-methylvalerate) and of (2R)-2,3-dihydroxy-3-methylbutanoate (2,3-dihydroxyisovalerate) into 2-oxo-3-methylbutanoate (2-oxoisovalerate), the penultimate precursor to L-isoleucine and L-valine, respectively. This chain is Dihydroxy-acid dehydratase, found in Mycolicibacterium paratuberculosis (strain ATCC BAA-968 / K-10) (Mycobacterium paratuberculosis).